The primary structure comprises 760 residues: Transglutaminase-activating metalloprotease (760 aa).

The signal sequence occupies residues 1-33 (MRPTPQRRAVATGALVAVTAMLAVGVQTTSANA). 2 disordered regions span residues 32–59 (NAGQ…PVKL) and 228–265 (KQGT…KTYN). The propeptide occupies 34–229 (GQDKAAHPAP…KLFEFQGVKQ (196 aa)). The span at 228 to 257 (KQGTGNSQHSGQVQIGTTKSGSSYQMNDTT) shows a compositional bias: polar residues. Position 366 (His366) interacts with Zn(2+). The active site involves Glu367. 2 residues coordinate Zn(2+): His370 and Glu390. His454 functions as the Proton donor in the catalytic mechanism. Residues 640–760 (TVNTTGGGSV…GTIDKWRLTF (121 aa)) form the P/Homo B domain.

This sequence belongs to the peptidase M4 family. The cofactor is Zn(2+).

Its subcellular location is the secreted. Cleaves the N-terminal propeptide of transglutaminase thus activating it. The protein is Transglutaminase-activating metalloprotease of Streptomyces mobaraensis (Streptoverticillium mobaraense).